A 135-amino-acid chain; its full sequence is C-type lectin BpLec (135 aa).

4 disulfides stabilise this stretch: cysteine 3–cysteine 14, cysteine 31–cysteine 131, cysteine 38–cysteine 133, and cysteine 106–cysteine 123. The region spanning 10–132 (MNGLCYKIFD…CESKNAFLCQ (123 aa)) is the C-type lectin domain. The Ca(2+) site is built by glutamine 96, aspartate 98, glutamate 104, asparagine 119, and aspartate 120. Positions 96–98 (QPD) match the Galactose-binding motif.

The protein belongs to the true venom lectin family. Homodimer; disulfide-linked. As to expression, expressed by the venom gland.

It localises to the secreted. Functionally, this lectin displays hemagglutinating activity on dog (128'000 HU/mg) and cat erythrocytes, that is inhibited by beta-galactosides (D-galactose, D-lactose, and N-acetyl-D-galactosamine) and EDTA. In addition, has been shown to hemagglutinate promastigote forms of Leishmania amazonensis. Also inhibits Gram-positive (S.aureus ATCC 25923) (MIC is 31.25 ug/ml) but not Gram-negative (E.coli ATCC 25922) bacteria. Is a calcium-dependent lectin. The chain is C-type lectin BpLec from Bothrops pauloensis (Neuwied's lancehead).